The primary structure comprises 777 residues: Aminopeptidase P (777 aa).

Positions 1-17 (MQLNFLLFVFIFLMVFH) are cleaved as a signal peptide. His-551 contributes to the substrate binding site. Mn(2+)-binding residues include Asp-570 and Asp-581. His-640 serves as a coordination point for substrate. His-644 lines the Mn(2+) pocket. His-653 is a substrate binding site. 2 residues coordinate Mn(2+): Glu-676 and Glu-690.

Belongs to the peptidase M24B family. In terms of assembly, homodimer. The cofactor is Mn(2+). The N-terminus may be proteolytically cleaved to generate a 73-kDa mature form.

It localises to the vacuole lumen. The protein resides in the cytoplasm. The enzyme catalyses Release of any N-terminal amino acid, including proline, that is linked to proline, even from a dipeptide or tripeptide.. With respect to regulation, partially activated by Co(2+) and Mg(2+) has no effect. Inhibited by 1 mM Zn(2+), Ni(2+), or Cu(2+). Inhibited by apstatin, a non-hydrolysable peptide analog. Catalyzes the removal of a penultimate prolyl residue from the N-termini of peptides. In the food vacuole, involved in the final step of host hemoglobin catabolism, by cleaving hemoglobin-derived oligopeptides. In the cytoplasm, may be involved in the last steps of the turnover of ubiquitinated proteins. This Plasmodium falciparum (isolate 3D7) protein is Aminopeptidase P.